We begin with the raw amino-acid sequence, 82 residues long: Mu-conotoxin MrVIB (82 aa).

The signal sequence occupies residues 1–22 (MKLTCMMIVAVLFLTAWTLVMA). Residues 23 to 49 (DDSNNGLANHFLKSRDEMEDPEASKLE) constitute a propeptide that is removed on maturation. 3 cysteine pairs are disulfide-bonded: Cys53–Cys71, Cys60–Cys76, and Cys70–Cys81.

It belongs to the conotoxin O1 superfamily. Expressed by the venom duct.

The protein localises to the secreted. Functionally, muO-conotoxins are gating-modifier toxins that inhibit sodium current by trapping the domain II voltage sensor in the closed position to prevent opening of the sodium channel. This toxin has a preference for Nav1.4/SCN4A over Nav1.2/SCN2A sodium channels. It blocks Nav channels by interacting mainly with the C-terminal part of the pore loop of domain-3. It also blocks fast-inactivating calcium current. Blocks Nav1.8/SCN10A sodium channels and has potent and long-lasting local anesthetic effects. It can also block propagation of action potentials in A- and C-fibers in sciatic nerve as well as skeletal muscle in isolated preparations. The polypeptide is Mu-conotoxin MrVIB (Conus marmoreus (Marble cone)).